The sequence spans 175 residues: ATP-dependent protease subunit HslV (175 aa).

The active site involves Thr-2. 3 residues coordinate Na(+): Ala-156, Cys-159, and Thr-162.

It belongs to the peptidase T1B family. HslV subfamily. As to quaternary structure, a double ring-shaped homohexamer of HslV is capped on each side by a ring-shaped HslU homohexamer. The assembly of the HslU/HslV complex is dependent on binding of ATP.

Its subcellular location is the cytoplasm. The enzyme catalyses ATP-dependent cleavage of peptide bonds with broad specificity.. Allosterically activated by HslU binding. In terms of biological role, protease subunit of a proteasome-like degradation complex believed to be a general protein degrading machinery. The sequence is that of ATP-dependent protease subunit HslV from Rhizobium johnstonii (strain DSM 114642 / LMG 32736 / 3841) (Rhizobium leguminosarum bv. viciae).